The primary structure comprises 293 residues: MKLSNQFLITITLLITSITFAQEAPHFKPGEDPRQPHQEWKLIENMSDEFEGKKIDEKKWQISGQGWIGRAPGLFLAENISLNNGSLQITTTMLPEPIVKNNKTYTHGGGYVGSRNGMTYGYYECEMKANKTFMSSTFWLINEGKDRLGCDKRTTELDIQESVGQITNDADWMKYFDQTMNSNTHSRNIPEGCEYEKGSSKGKAELGGKAYEDFHVYGVWWKSKDEIIFFLDGKMQSKVTPPADFDIEMYLRMVVETYDWNPVPKDGGMTGSKEDRTTTYNWVRSWQLVDSKN.

An N-terminal signal peptide occupies residues 1–21; that stretch reads MKLSNQFLITITLLITSITFA. Residues 38-291 enclose the GH16 domain; the sequence is QEWKLIENMS…WVRSWQLVDS (254 aa). Substrate is bound by residues Trp-67, Arg-70, Glu-156, Glu-161, and Glu-256. Glu-156 functions as the Nucleophile in the catalytic mechanism. Glu-161 acts as the Proton donor in catalysis.

The protein belongs to the glycosyl hydrolase 16 family.

It localises to the periplasm. The catalysed reaction is Hydrolysis of beta-D-galactopyranose-(1-&gt;4)-alpha-L-galactopyranose-6-sulfate linkages in porphyran.. Its function is as follows. Cleaves the sulfated polysaccharide porphyran at the (1-&gt;4) linkages between beta-D-galactopyranose and alpha-L-galactopyranose-6-sulfate, forming mostly the disaccharide alpha-L-galactopyranose-6-sulfate-(1-&gt;3)-beta-D-galactose. Some longer oligosaccharides of even number of residues are also observed. Inactive on the non-sulfated agarose portion of the porphyran backbone. In contrast to PorA, tolerates the presence of 3-6-anhydro-L-galactose in subsite -2. The chain is Beta-porphyranase B (porB) from Zobellia galactanivorans (strain DSM 12802 / CCUG 47099 / CIP 106680 / NCIMB 13871 / Dsij).